The primary structure comprises 424 residues: Enolase (424 aa).

Gln163 is a (2R)-2-phosphoglycerate binding site. The Proton donor role is filled by Glu204. Mg(2+) contacts are provided by Asp241, Glu284, and Asp311. (2R)-2-phosphoglycerate contacts are provided by Lys336, Arg365, Ser366, and Lys387. The Proton acceptor role is filled by Lys336.

Belongs to the enolase family. Mg(2+) serves as cofactor.

Its subcellular location is the cytoplasm. The protein resides in the secreted. It localises to the cell surface. The catalysed reaction is (2R)-2-phosphoglycerate = phosphoenolpyruvate + H2O. Its pathway is carbohydrate degradation; glycolysis; pyruvate from D-glyceraldehyde 3-phosphate: step 4/5. In terms of biological role, catalyzes the reversible conversion of 2-phosphoglycerate (2-PG) into phosphoenolpyruvate (PEP). It is essential for the degradation of carbohydrates via glycolysis. The polypeptide is Enolase (Dictyoglomus thermophilum (strain ATCC 35947 / DSM 3960 / H-6-12)).